We begin with the raw amino-acid sequence, 263 residues long: Glucosamine-6-phosphate deaminase (263 aa).

Asp67 (proton acceptor; for enolization step) is an active-site residue. Asn136 serves as the catalytic For ring-opening step. His138 (proton acceptor; for ring-opening step) is an active-site residue. Residue Glu143 is the For ring-opening step of the active site.

Belongs to the glucosamine/galactosamine-6-phosphate isomerase family. NagB subfamily. Homohexamer.

The catalysed reaction is alpha-D-glucosamine 6-phosphate + H2O = beta-D-fructose 6-phosphate + NH4(+). The protein operates within amino-sugar metabolism; N-acetylneuraminate degradation; D-fructose 6-phosphate from N-acetylneuraminate: step 5/5. In terms of biological role, catalyzes the reversible isomerization-deamination of glucosamine 6-phosphate (GlcN6P) to form fructose 6-phosphate (Fru6P) and ammonium ion. The chain is Glucosamine-6-phosphate deaminase from Cellvibrio japonicus (strain Ueda107) (Pseudomonas fluorescens subsp. cellulosa).